An 850-amino-acid polypeptide reads, in one-letter code: G-type lectin S-receptor-like serine/threonine-protein kinase CES101 (850 aa).

The signal sequence occupies residues 1-22; that stretch reads MWSNCIFLTLFTFYLFLGQSCC. The Extracellular segment spans residues 23–423; the sequence is QTDTLLQGQY…IKGSKLAATW (401 aa). The Bulb-type lectin domain occupies 24–144; sequence TDTLLQGQYL…DSDGSMKRTL (121 aa). 4 N-linked (GlcNAc...) asparagine glycosylation sites follow: N55, N118, N194, and N374. A PAN domain is found at 334–416; that stretch reads CSRFGYTFRE…PRTIYIRIKG (83 aa). 2 disulfide bridges follow: C367–C390 and C371–C377. A helical membrane pass occupies residues 424 to 444; sequence LVVVASLFLIIPVTWLIIYLV. Over 445–850 the chain is Cytoplasmic; the sequence is LRKFKIKGTN…RVTITVMEAR (406 aa). In terms of domain architecture, Protein kinase spans 527–816; it reads FSDANKLGEG…ALSLPKEPAF (290 aa). ATP-binding positions include 533–541 and K555; that span reads LGEGGFGPV. S561 is modified (phosphoserine). The segment at 616–633 is caM-binding; it reads LRKIVLDWKLRFRIMEGI. Catalysis depends on D652, which acts as the Proton acceptor. The residue at position 669 (S669) is a Phosphoserine. T686 is subject to Phosphothreonine. 2 positions are modified to phosphoserine: S730 and S838. T845 bears the Phosphothreonine mark.

It belongs to the protein kinase superfamily. Ser/Thr protein kinase family. Mostly expressed in leaves, and, to a lower extent, in roots and flowers.

It localises to the cell membrane. It catalyses the reaction L-seryl-[protein] + ATP = O-phospho-L-seryl-[protein] + ADP + H(+). It carries out the reaction L-threonyl-[protein] + ATP = O-phospho-L-threonyl-[protein] + ADP + H(+). In terms of biological role, promotes the expression of genes involved in photosynthesis at least in dedifferentiated calli. The protein is G-type lectin S-receptor-like serine/threonine-protein kinase CES101 (CES101) of Arabidopsis thaliana (Mouse-ear cress).